The chain runs to 219 residues: Ribose-5-phosphate isomerase A (219 aa).

Substrate contacts are provided by residues 28–31 (TGST), 81–84 (DGAD), and 94–97 (KGGG). Residue glutamate 103 is the Proton acceptor of the active site. Lysine 121 provides a ligand contact to substrate.

Belongs to the ribose 5-phosphate isomerase family. As to quaternary structure, homodimer.

The catalysed reaction is aldehydo-D-ribose 5-phosphate = D-ribulose 5-phosphate. It participates in carbohydrate degradation; pentose phosphate pathway; D-ribose 5-phosphate from D-ribulose 5-phosphate (non-oxidative stage): step 1/1. Catalyzes the reversible conversion of ribose-5-phosphate to ribulose 5-phosphate. The chain is Ribose-5-phosphate isomerase A from Enterobacter cloacae.